The primary structure comprises 384 residues: Glucans biosynthesis protein C (384 aa).

10 helical membrane passes run 17–37 (AWLM…THSW), 54–74 (FIHA…SYML), 91–111 (VGIP…ILLQ), 140–160 (LWFL…FTWF), 173–193 (AISL…YAAI), 212–232 (FIVM…LAFI), 240–260 (FTTP…AYLL), 274–294 (TESV…FSLG), 311–331 (ASLF…AYIT), and 338–358 (LIGF…LYEI).

This sequence belongs to the acyltransferase 3 family. OpgC subfamily.

The protein resides in the cell membrane. The protein operates within glycan metabolism; osmoregulated periplasmic glucan (OPG) biosynthesis. In terms of biological role, necessary for the succinyl substitution of periplasmic glucans. Could catalyze the transfer of succinyl residues from the cytoplasmic side of the membrane to the nascent glucan backbones on the periplasmic side of the membrane. In Salmonella schwarzengrund (strain CVM19633), this protein is Glucans biosynthesis protein C.